A 90-amino-acid polypeptide reads, in one-letter code: uncharacterized protein (90 aa).

This is an uncharacterized protein from Archaeoglobus fulgidus (strain ATCC 49558 / DSM 4304 / JCM 9628 / NBRC 100126 / VC-16).